The primary structure comprises 343 residues: MHRLALTAQDNLAVAPMLADLAGRYPDIEDPELIRSAPVLAAKGLPPHLLAFLDDFRLREPSALCVISGLDVDQDRLGPTPEHWRDSQIGSRSLNLEIFFLLCGAALGDVFGWATQQDGRIMHDVLPIKGHEHYELGSNSLQHLSWHTEDSFHPCRGDYVALMCLKNPYEAETMVCDAGDLDWPNLDVDALFEPVFTQMPDNSHLPQNTAESTGDPTKDRLRARSFELIKSWNENPVRRAVLYGDRQNPYMALDPYHMKMDDWSERSLEAFQALCEEIEAKMQDVVLHPGDIAFIDNFRAVHGRRSFRARYDGSDRWLKRLNITRNLRGSRAWRPAPDDRVIY.

Positions 147 and 149 each coordinate Fe cation. The segment covering 199-215 (MPDNSHLPQNTAESTGD) has biased composition (polar residues). Positions 199–218 (MPDNSHLPQNTAESTGDPTK) are disordered. Position 302 (His-302) interacts with Fe cation. Arg-316 contributes to the 2-oxoglutarate binding site.

It belongs to the clavaminate synthase family. The cofactor is Fe(2+).

The enzyme catalyses L-ornithine + 2-oxoglutarate + O2 = (3S)-3-hydroxy-L-ornithine + succinate + CO2. It carries out the reaction L-arginine + 2-oxoglutarate + O2 = (2S,3S)-hydroxyarginine + succinate + CO2. In terms of biological role, alpha-ketoglutarate-dependent dioxygenase that in vitro catalyzes the regio- and stereoselective hydroxylation of L-ornithine and L-arginine, leading to (3S)-3-hydroxy-L-ornithine and (3S)-3-hydroxy-L-arginine, respectively. Cannot use L-lysine, D-ornithine, or D-arginine as substrate. The polypeptide is L-ornithine/L-arginine 3-hydroxylase (Catenulispora acidiphila (strain DSM 44928 / JCM 14897 / NBRC 102108 / NRRL B-24433 / ID139908)).